Here is a 344-residue protein sequence, read N- to C-terminus: Anthranilate phosphoribosyltransferase (344 aa).

5-phospho-alpha-D-ribose 1-diphosphate is bound by residues Gly-84, 87–88 (GD), Ser-92, 94–97 (NIST), 112–120 (KHGNRSASG), and Ser-124. Residue Gly-84 participates in anthranilate binding. Ser-96 is a Mg(2+) binding site. Asn-115 is a binding site for anthranilate. Anthranilate is bound at residue Arg-170. Residues Asp-229 and Glu-230 each contribute to the Mg(2+) site.

Belongs to the anthranilate phosphoribosyltransferase family. In terms of assembly, homodimer. Mg(2+) serves as cofactor.

It carries out the reaction N-(5-phospho-beta-D-ribosyl)anthranilate + diphosphate = 5-phospho-alpha-D-ribose 1-diphosphate + anthranilate. It participates in amino-acid biosynthesis; L-tryptophan biosynthesis; L-tryptophan from chorismate: step 2/5. In terms of biological role, catalyzes the transfer of the phosphoribosyl group of 5-phosphorylribose-1-pyrophosphate (PRPP) to anthranilate to yield N-(5'-phosphoribosyl)-anthranilate (PRA). In Synechococcus sp. (strain RCC307), this protein is Anthranilate phosphoribosyltransferase.